A 372-amino-acid chain; its full sequence is Biglycan (372 aa).

Positions 1-19 are cleaved as a signal peptide; that stretch reads MPTMWPLWLLASLLALSQA. Residues 20 to 40 constitute a propeptide that is removed on maturation; that stretch reads LPFEQKGFWDFTLDDGLPMLN. Residues serine 45 and serine 51 are each glycosylated (O-linked (Xyl...) (glycosaminoglycan) serine). Disulfide bonds link cysteine 67–cysteine 73 and cysteine 71–cysteine 80. 12 LRR repeats span residues 86–106, 107–130, 131–154, 155–175, 176–199, 200–224, 225–245, 246–269, 270–293, 294–316, 317–346, and 347–372; these read KAVPKEISPDTTLLDLQNNEI, SELRKDDFKGLQHLYALVLVNNKI, SKIHEKAFSPLRKLQKLYISKNHL, VEIPPNLPSSLVELRIHDNRI, RKVPKGVFSGLRNMNCIEMGGNPL, ENSGFQPGAFDGLKLNYLRISEAKL, TGIPKDLPETLNELHLDHNKI, QAIELEDLLRYSKLYRLGLGHNQI, RMIENGSLSFLPTLRELHLDNNKL, SRVPAGLPDLKLLQVVYLHTNNI, TKVGVNDFCPVGFGVKRAYYNGISLFNNPV, and PYWEVQPATFRCVTDRLAIQFGNYKK. 2 N-linked (GlcNAc...) asparagine glycosylation sites follow: asparagine 274 and asparagine 315. Cysteine 325 and cysteine 358 are oxidised to a cystine.

The protein belongs to the small leucine-rich proteoglycan (SLRP) family. SLRP class I subfamily. Homodimer. Forms a ternary complex with MFAP2 and ELN. Post-translationally, the two attached glycosaminoglycan chains can be either chondroitin sulfate or dermatan sulfate.

Its subcellular location is the secreted. The protein localises to the extracellular space. The protein resides in the extracellular matrix. Its function is as follows. May be involved in collagen fiber assembly. The chain is Biglycan (BGN) from Equus caballus (Horse).